Here is a 183-residue protein sequence, read N- to C-terminus: uncharacterized protein (183 aa).

A compositionally biased stretch (low complexity) spans 105 to 149 (YNTNNSNTNTNYNNNNNNNNNNNNNNNNNNNKNNNNNNNNNNSNS). The tract at residues 105–151 (YNTNNSNTNTNYNNNNNNNNNNNNNNNNNNNKNNNNNNNNNNSNSKI) is disordered.

This is an uncharacterized protein from Dictyostelium discoideum (Social amoeba).